The chain runs to 156 residues: Transcription factor E (156 aa).

One can recognise an HTH TFE/IIEalpha-type domain in the interval 1–72; it reads MYGEKAKKVL…LWILNIDQIE (72 aa).

This sequence belongs to the TFE family. As to quaternary structure, monomer. Interaction with RNA polymerase subunits RpoF and RpoE is necessary for Tfe stimulatory transcription activity. Able to interact with Tbp and RNA polymerase in the absence of DNA promoter. Interacts both with the preinitiation and elongation complexes.

In terms of biological role, transcription factor that plays a role in the activation of archaeal genes transcribed by RNA polymerase. Facilitates transcription initiation by enhancing TATA-box recognition by TATA-box-binding protein (Tbp), and transcription factor B (Tfb) and RNA polymerase recruitment. Not absolutely required for transcription in vitro, but particularly important in cases where Tbp or Tfb function is not optimal. It dynamically alters the nucleic acid-binding properties of RNA polymerases by stabilizing the initiation complex and destabilizing elongation complexes. Seems to translocate with the RNA polymerase following initiation and acts by binding to the non template strand of the transcription bubble in elongation complexes. This Staphylothermus marinus (strain ATCC 43588 / DSM 3639 / JCM 9404 / F1) protein is Transcription factor E.